The sequence spans 418 residues: MKLESQFLSFLYSRGYCSQCTNISMLDQLMSQQCVHAYIGFDCTAKSLHVGSLIQVMILRHLQKFGHKPIILLGDGTTKIGDPSGKDKSRAMLSASEIEENALGIYEVLKKFIVFGDGPHDALLVRNAEWLNGLNYIEFLRDIGKHFSVNNMLTFDSVRLRLEREQNLSFLEFNYMLLQSYDFVELNRRYNCLLQIGGSDQWGNIVSGVELGRKLRLPELFGLTTNLLLTSSGEKMGKTAQGAVWLDGNMYSPVDYWQYFRNVKDEDVGRFLRLFTELSLNEIRNLELLQGHEINESKKILATEATRICHGEEIAQSVANDALKVFECNDDSGLSVFYVKKYDVELGLPIIKLLQMCEMEKSSSSARRLINDKGCKINDVVVLDMNYKLSLKDFYNTSYVKLSCGKKRHLKVMLESDF.

Tyrosine 38 contacts L-tyrosine. The 'HIGH' region signature appears at 43-52 (CTAKSLHVGS). L-tyrosine is bound by residues tyrosine 175 and glutamine 179. The 'KMSKS' region signature appears at 235–239 (KMGKT). Lysine 238 lines the ATP pocket. The region spanning 348–413 (LPIIKLLQMC…CGKKRHLKVM (66 aa)) is the S4 RNA-binding domain.

Belongs to the class-I aminoacyl-tRNA synthetase family. TyrS type 1 subfamily. As to quaternary structure, homodimer.

It localises to the cytoplasm. It carries out the reaction tRNA(Tyr) + L-tyrosine + ATP = L-tyrosyl-tRNA(Tyr) + AMP + diphosphate + H(+). Functionally, catalyzes the attachment of tyrosine to tRNA(Tyr) in a two-step reaction: tyrosine is first activated by ATP to form Tyr-AMP and then transferred to the acceptor end of tRNA(Tyr). This is Tyrosine--tRNA ligase from Ehrlichia chaffeensis (strain ATCC CRL-10679 / Arkansas).